The following is a 160-amino-acid chain: Nucleotide-binding protein BP2916 (160 aa).

The protein belongs to the YajQ family.

Nucleotide-binding protein. This Bordetella pertussis (strain Tohama I / ATCC BAA-589 / NCTC 13251) protein is Nucleotide-binding protein BP2916.